Here is a 628-residue protein sequence, read N- to C-terminus: Netrin-4 (628 aa).

An N-terminal signal peptide occupies residues 1-19 (MGSCARLLLLWGCSAVAAG). The region spanning 30 to 261 (CEKACNPRMG…AVYDFIVKGS (232 aa)) is the Laminin N-terminal domain. Asparagine 56 and asparagine 163 each carry an N-linked (GlcNAc...) asparagine glycan. Disulfide bonds link cysteine 262/cysteine 271, cysteine 264/cysteine 293, cysteine 295/cysteine 304, cysteine 307/cysteine 329, cysteine 332/cysteine 341, cysteine 334/cysteine 359, cysteine 362/cysteine 371, cysteine 374/cysteine 392, cysteine 395/cysteine 413, cysteine 397/cysteine 420, cysteine 422/cysteine 431, and cysteine 434/cysteine 446. 3 consecutive Laminin EGF-like domains span residues 262-331 (CFCN…ECRT), 332-394 (CKCN…ACKA), and 395-448 (CSCH…GCRP). Residue asparagine 353 is glycosylated (N-linked (GlcNAc...) asparagine). The N-linked (GlcNAc...) asparagine glycan is linked to asparagine 483. Disulfide bonds link cysteine 506-cysteine 576 and cysteine 520-cysteine 627. An NTR domain is found at 506-627 (CECKEQVLGN…RVMHILKRDC (122 aa)).

As to quaternary structure, may form a homodimer. As to expression, expressed in kidney, liver, heart, ovary, testis, retina, brain, olfactory bulb, and widely expressed in embryo.

The protein localises to the secreted. It is found in the extracellular space. The protein resides in the extracellular matrix. It localises to the basement membrane. May play an important role in neural, kidney and vascular development. Promotes neurite elongation from olfactory bulb explants. In Mus musculus (Mouse), this protein is Netrin-4 (Ntn4).